Consider the following 257-residue polypeptide: Protein windbeutel (257 aa).

An N-terminal signal peptide occupies residues 1 to 21 (MMHILVTLLLVAIHSIPTTWA). The interval 24–27 (CTGC) is CXXC motif. A Prevents secretion from ER motif is present at residues 254–257 (KEEL).

As to quaternary structure, homodimer. Interacts with pip; the interaction is direct and does not require pip to be folded. In terms of tissue distribution, briefly expressed in the follicle cells of the ovary, at around the time when the dorsoventral axis of the egg chamber is first established.

Its subcellular location is the endoplasmic reticulum lumen. Its function is as follows. Probable chaperone protein involved in dorsoventral axis patterning in early embryos. Probably acts by folding and targeting pipe (pip) into the Golgi. The sequence is that of Protein windbeutel from Drosophila melanogaster (Fruit fly).